Here is a 424-residue protein sequence, read N- to C-terminus: Tyrosine--tRNA ligase (424 aa).

Y36 contacts L-tyrosine. The short motif at 41–50 (PTAPSLHAGH) is the 'HIGH' region element. L-tyrosine contacts are provided by Y171 and Q175. Positions 231–235 (KFGKS) match the 'KMSKS' region motif. K234 serves as a coordination point for ATP. The S4 RNA-binding domain occupies 356 to 413 (DGIVDLLVASGLSASKGAARRTIHEGGVSVNNIRVDNEEWVPQSSDFLHGRWLVLRRG).

It belongs to the class-I aminoacyl-tRNA synthetase family. TyrS type 1 subfamily. In terms of assembly, homodimer.

Its subcellular location is the cytoplasm. The catalysed reaction is tRNA(Tyr) + L-tyrosine + ATP = L-tyrosyl-tRNA(Tyr) + AMP + diphosphate + H(+). Functionally, catalyzes the attachment of tyrosine to tRNA(Tyr) in a two-step reaction: tyrosine is first activated by ATP to form Tyr-AMP and then transferred to the acceptor end of tRNA(Tyr). The chain is Tyrosine--tRNA ligase from Mycobacterium bovis (strain ATCC BAA-935 / AF2122/97).